We begin with the raw amino-acid sequence, 350 residues long: MTVTPLGVPTISRPAAGMPTTGPLVDTFGRIATDLRVSLTDRCNLRCTYCMPAEGLDWLPGEQLLSADELIRLLRIAVTRLGITNVRFTGGEPLVVRHLEDVVAATGALRPRPEMAMTTNGIGLAKRARALKAAGLDRVNVSLDSVDAAHFARITRRDRLGDVLAGLAAAKEAGLTPVKVNAVLDPDTGLDDAVSLLRYCLDHGYQLRIIEQMPLDAEHQWQRGRSLEAAGILAALRAHFTLVPDSKPRGSAPAQLWRVDGGTATVGVIASVSEAFCAACDRTRLTADGQVRNCLFAREESDLRRLLRGGADDDAIEQAWRAAMWTKAAGHGINDPGFEQPSRPMSAIGG.

Residues 27–245 (TFGRIATDLR…LRAHFTLVPD (219 aa)) form the Radical SAM core domain. Arg-36 serves as a coordination point for GTP. The [4Fe-4S] cluster site is built by Cys-43 and Cys-47. Tyr-49 lines the S-adenosyl-L-methionine pocket. Cys-50 serves as a coordination point for [4Fe-4S] cluster. Residue Arg-87 coordinates GTP. Gly-91 is a binding site for S-adenosyl-L-methionine. Thr-118 contributes to the GTP binding site. Ser-142 is an S-adenosyl-L-methionine binding site. Residue Lys-179 coordinates GTP. Residue Met-213 coordinates S-adenosyl-L-methionine. Residues Cys-277 and Cys-280 each contribute to the [4Fe-4S] cluster site. 282–284 (RTR) is a binding site for GTP. Residue Cys-294 coordinates [4Fe-4S] cluster.

Belongs to the radical SAM superfamily. MoaA family. Monomer and homodimer. It depends on [4Fe-4S] cluster as a cofactor.

It carries out the reaction GTP + AH2 + S-adenosyl-L-methionine = (8S)-3',8-cyclo-7,8-dihydroguanosine 5'-triphosphate + 5'-deoxyadenosine + L-methionine + A + H(+). Its pathway is cofactor biosynthesis; molybdopterin biosynthesis. Catalyzes the cyclization of GTP to (8S)-3',8-cyclo-7,8-dihydroguanosine 5'-triphosphate. In Mycobacterium sp. (strain JLS), this protein is GTP 3',8-cyclase.